We begin with the raw amino-acid sequence, 503 residues long: Aspartyl/glutamyl-tRNA(Asn/Gln) amidotransferase subunit B (503 aa).

This sequence belongs to the GatB/GatE family. GatB subfamily. Heterotrimer of A, B and C subunits.

The enzyme catalyses L-glutamyl-tRNA(Gln) + L-glutamine + ATP + H2O = L-glutaminyl-tRNA(Gln) + L-glutamate + ADP + phosphate + H(+). It catalyses the reaction L-aspartyl-tRNA(Asn) + L-glutamine + ATP + H2O = L-asparaginyl-tRNA(Asn) + L-glutamate + ADP + phosphate + 2 H(+). Allows the formation of correctly charged Asn-tRNA(Asn) or Gln-tRNA(Gln) through the transamidation of misacylated Asp-tRNA(Asn) or Glu-tRNA(Gln) in organisms which lack either or both of asparaginyl-tRNA or glutaminyl-tRNA synthetases. The reaction takes place in the presence of glutamine and ATP through an activated phospho-Asp-tRNA(Asn) or phospho-Glu-tRNA(Gln). This Jannaschia sp. (strain CCS1) protein is Aspartyl/glutamyl-tRNA(Asn/Gln) amidotransferase subunit B.